A 645-amino-acid chain; its full sequence is UPF0313 protein CLM_0251 (645 aa).

The Radical SAM core domain maps to 295–566; sequence AIKEVKFSIT…RMQRALLQFS (272 aa). Positions 309, 313, and 316 each coordinate [4Fe-4S] cluster. A disordered region spans residues 598 to 645; the sequence is NKPYKKSHKKNNAKNNNNHYNKNNNYNKNKDISKKNKKNSLSKHKKRK. Over residues 600–609 the composition is skewed to basic residues; the sequence is PYKKSHKKNN. Positions 610 to 624 are enriched in low complexity; it reads AKNNNNHYNKNNNYN. Over residues 632 to 645 the composition is skewed to basic residues; the sequence is KNKKNSLSKHKKRK.

The protein belongs to the UPF0313 family. [4Fe-4S] cluster serves as cofactor.

The chain is UPF0313 protein CLM_0251 from Clostridium botulinum (strain Kyoto / Type A2).